A 556-amino-acid chain; its full sequence is Guanine nucleotide-binding protein-like 3 homolog (556 aa).

Residues Asn-29–Ser-50 are disordered. Residues Lys-58–Leu-95 adopt a coiled-coil conformation. A CP-type G domain is found at Ala-138 to Val-317. GTP contacts are provided by residues Asn-184–Asp-187, Gly-266–Ser-273, and Asp-310–Gly-313. 2 disordered regions span residues Ala-461 to Leu-508 and Lys-525 to Met-556. Positions Asp-466 to Asp-478 are enriched in acidic residues. The segment covering Lys-525–Ala-535 has biased composition (basic residues).

This sequence belongs to the TRAFAC class YlqF/YawG GTPase family.

It localises to the nucleus. Functionally, may play a role in regulating cellular proliferation in both germline and somatic tissues. This chain is Guanine nucleotide-binding protein-like 3 homolog, found in Caenorhabditis elegans.